A 379-amino-acid chain; its full sequence is 3-dehydroquinate synthase (379 aa).

Residues 67-72 (SGEKNK), 101-105 (GVVLD), 125-126 (TT), Lys-138, and Lys-147 each bind NAD(+). Zn(2+) is bound by residues Glu-180, His-242, and His-258.

The protein belongs to the sugar phosphate cyclases superfamily. Dehydroquinate synthase family. Requires NAD(+) as cofactor. Co(2+) is required as a cofactor. It depends on Zn(2+) as a cofactor.

It is found in the cytoplasm. It catalyses the reaction 7-phospho-2-dehydro-3-deoxy-D-arabino-heptonate = 3-dehydroquinate + phosphate. The protein operates within metabolic intermediate biosynthesis; chorismate biosynthesis; chorismate from D-erythrose 4-phosphate and phosphoenolpyruvate: step 2/7. Catalyzes the conversion of 3-deoxy-D-arabino-heptulosonate 7-phosphate (DAHP) to dehydroquinate (DHQ). This chain is 3-dehydroquinate synthase, found in Chlamydia abortus (strain DSM 27085 / S26/3) (Chlamydophila abortus).